We begin with the raw amino-acid sequence, 348 residues long: MNFPIAAESSLPQRKAEHLQLCLEAGVESPEVTTGLERYRFQHCALPNLSLQALDLGTQFLGRSLGAPLLISSMTGGTETAQRINCRLAIAAQKYRLAMGVGSQRVMLRQPETTPTFDVRDLAPDILLLANLGAVQLNYGVTPAEAQQLVDRLGADALILHLNPLQECIQAEGDTDFRGLLGRIGELCAALSVPVIVKEVGNGLSAMVAAQLLSAGVAALDVAGAGGTSWSRVEGQRAVDPLLRRLGDRFGDWGIPTAESLQQVRQVSATVPLIASGGIRHGLDAAKAIALGADLVGLARPFLVAADQSEEVLDQWITELLAELRIVRFCTDSGDWAALRRPGVLRPC.

Substrate is bound at residue 14 to 15 (RK). FMN contacts are provided by residues Ser72, 73-75 (SMT), Ser103, and Asn131. 103–105 (SQR) serves as a coordination point for substrate. Residue Gln166 coordinates substrate. Glu167 contacts Mg(2+). Residues Lys198, Thr228, 278-280 (GIR), and 299-300 (AR) each bind FMN.

It belongs to the IPP isomerase type 2 family. As to quaternary structure, homooctamer. Dimer of tetramers. Requires FMN as cofactor. NADPH serves as cofactor. It depends on Mg(2+) as a cofactor.

The protein localises to the cytoplasm. It carries out the reaction isopentenyl diphosphate = dimethylallyl diphosphate. Involved in the biosynthesis of isoprenoids. Catalyzes the 1,3-allylic rearrangement of the homoallylic substrate isopentenyl (IPP) to its allylic isomer, dimethylallyl diphosphate (DMAPP). The sequence is that of Isopentenyl-diphosphate delta-isomerase from Synechococcus sp. (strain ATCC 27144 / PCC 6301 / SAUG 1402/1) (Anacystis nidulans).